The primary structure comprises 350 residues: Vancomycin C-type resistance protein VanC2 (350 aa).

Residues glutamate 14 and serine 187 contribute to the active site. The ATP-grasp domain occupies 141-343 (HQAAAAIGVQ…YQELLQKLLV (203 aa)). Residue 171–226 (IQTHGFPVFFKPNEAGSSKGITKVTCVEEIASALKEAFTYCSAVLLQKNIAGVEIG) participates in ATP binding. Mg(2+) contacts are provided by aspartate 297, glutamate 310, and asparagine 312. Mn(2+) contacts are provided by aspartate 297, glutamate 310, and asparagine 312. The active site involves serine 321.

It belongs to the D-alanine--D-alanine ligase family. Homodimer. It depends on Mg(2+) as a cofactor. The cofactor is Mn(2+).

Its subcellular location is the cell membrane. It catalyses the reaction D-serine + D-alanine + ATP = D-alanyl-D-serine + ADP + phosphate + H(+). Its pathway is cell wall biogenesis; peptidoglycan biosynthesis. Inhibited by D-cycloserine. Required for low-level resistance to the glycopeptide antibiotic vancomycin. D-alanine--D-alanine ligase of altered specificity, which catalyzes synthesis of D-Ala-D-Ser; produces a peptidoglycan which does not terminate in D-alanine but in D-serine, thus probably reducing affinity for vancomycin. Only insignificant catalytic synthesis of D-Ala-D-Ala in vitro. In Enterococcus casseliflavus (Enterococcus flavescens), this protein is Vancomycin C-type resistance protein VanC2.